The primary structure comprises 940 residues: Insulin receptor substrate 1 (940 aa).

Residues Gly8–Arg109 form the PH domain. Positions Tyr122–Asn236 constitute an IRS-type PTB domain. Phosphoserine occurs at positions 284, 285, and 340. At Tyr407 the chain carries Phosphotyrosine; by INSR. A YXXM motif 1 motif is present at residues Tyr407–Met410. Over residues Asn523–Thr540 the composition is skewed to polar residues. Positions Asn523–Ala549 are disordered. At Ser548 the chain carries Phosphoserine. The YXXM motif 2 signature appears at Tyr639 to Met642. Residue Tyr883 is modified to Phosphotyrosine; by INSR. A disordered region spans residues Asn895–Glu915. Ser904 and Ser907 each carry phosphoserine. The residue at position 920 (Tyr920) is a Phosphotyrosine; by INSR.

In terms of assembly, bindings to phosphatidylinositol 3-kinase and SHP2.

Activates phosphatidylinositol 3-kinase when bound to the regulatory p85 subunit. May mediate the control of various cellular processes by insulin-like peptides. When phosphorylated by the insulin receptor binds specifically to various cellular proteins containing SH2 domains. Involved in control of cell proliferation, cell size, and body and organ growth throughout development. Also has a role in a signaling pathway controlling the physiological response required to endure periods of low nutrient conditions. Insulin/insulin-like growth factor (IGF) signaling pathway has a role in regulating aging and is necessary in the ovary for vitellogenic maturation. In Drosophila ananassae (Fruit fly), this protein is Insulin receptor substrate 1.